A 198-amino-acid chain; its full sequence is Hookworm platelet inhibitor 1 (198 aa).

An N-terminal signal peptide occupies residues 1–17; that stretch reads MSSYLLVLVAILGFAYA. Disulfide bonds link Cys-24/Cys-65, Cys-78/Cys-146, Cys-141/Cys-154, Cys-174/Cys-186, and Cys-177/Cys-195.

It belongs to the CRISP family. As to quaternary structure, monomer. As to expression, detected in cephalic glands.

It is found in the secreted. Hookworms inhibitor of platelet aggregation and adhesion. Native protein inhibits platelet aggregation induced by ADP, epinephrine, and thrombin. In addition, it prevents adhesion of resting platelets to immobilized fibrinogen and collagen. May act by binding to glycoprotein IIb/IIIa (ITGA2B/ITGB3) and integrin alpha-2/beta-1 (ITGA1/ITGB1), respectively. It is noteworthy that the recombinant protein fails to inhibit binding to fibrinogen (through ITGA2B/ITGB3) and collagen (through ITGA1/ITGB1). The polypeptide is Hookworm platelet inhibitor 1 (Ancylostoma caninum (Dog hookworm)).